Here is a 194-residue protein sequence, read N- to C-terminus: Large ribosomal subunit protein bL25 (194 aa).

Belongs to the bacterial ribosomal protein bL25 family. CTC subfamily. As to quaternary structure, part of the 50S ribosomal subunit; part of the 5S rRNA/L5/L18/L25 subcomplex. Contacts the 5S rRNA. Binds to the 5S rRNA independently of L5 and L18.

This is one of the proteins that binds to the 5S RNA in the ribosome where it forms part of the central protuberance. The chain is Large ribosomal subunit protein bL25 from Geotalea uraniireducens (strain Rf4) (Geobacter uraniireducens).